A 217-amino-acid polypeptide reads, in one-letter code: Peptide methionine sulfoxide reductase MsrA (217 aa).

Residue cysteine 56 is part of the active site.

Belongs to the MsrA Met sulfoxide reductase family.

It catalyses the reaction L-methionyl-[protein] + [thioredoxin]-disulfide + H2O = L-methionyl-(S)-S-oxide-[protein] + [thioredoxin]-dithiol. The catalysed reaction is [thioredoxin]-disulfide + L-methionine + H2O = L-methionine (S)-S-oxide + [thioredoxin]-dithiol. Functionally, has an important function as a repair enzyme for proteins that have been inactivated by oxidation. Catalyzes the reversible oxidation-reduction of methionine sulfoxide in proteins to methionine. The protein is Peptide methionine sulfoxide reductase MsrA of Corynebacterium melassecola.